Here is a 479-residue protein sequence, read N- to C-terminus: 3-isopropylmalate dehydratase large subunit (479 aa).

The [4Fe-4S] cluster site is built by C350, C415, and C418.

This sequence belongs to the aconitase/IPM isomerase family. LeuC type 1 subfamily. Heterodimer of LeuC and LeuD. The cofactor is [4Fe-4S] cluster.

The enzyme catalyses (2R,3S)-3-isopropylmalate = (2S)-2-isopropylmalate. It functions in the pathway amino-acid biosynthesis; L-leucine biosynthesis; L-leucine from 3-methyl-2-oxobutanoate: step 2/4. In terms of biological role, catalyzes the isomerization between 2-isopropylmalate and 3-isopropylmalate, via the formation of 2-isopropylmaleate. In Caulobacter vibrioides (strain ATCC 19089 / CIP 103742 / CB 15) (Caulobacter crescentus), this protein is 3-isopropylmalate dehydratase large subunit.